The following is a 367-amino-acid chain: MASSGGELGSLFDHHVQRAVCDTRAKYREGRRPRAVKVYTINLESQYLLIQGVPAVGVMKELVERFALYGAIEQYNALDEYPAEDFTEVYLIKFMNLQSARTAKRKMDEQSFFGGLLHVCYAPEFETVEETRKKLQMRKAYVVKTTENKDHYVTKKKLVTEHKDTEDFRQDFHSEMSGFCKAALNTSAGNSNPYLPYSCELPLCYFSSKCMCSSGGPVDRAPDSSKDGRNHHKTMGHYNHNDSLRKTQINSLKNSVACPGAQKAITSSEAVDRFMPRTTQLQERKRRREDDRKLGTFLQTNPTGNEIMIGPLLPDISKVDMHDDSLNTTANLIRHKLKEVISSVPKPPEDKPEDVHTSHPLKQRRRI.

The RRM domain maps to 46–124 (QYLLIQGVPA…GLLHVCYAPE (79 aa)). Disordered regions lie at residues 217 to 243 (PVDR…HNDS), 280 to 302 (QLQE…QTNP), and 343 to 367 (SVPK…RRRI). Residues 347 to 357 (PPEDKPEDVHT) are compositionally biased toward basic and acidic residues.

This sequence belongs to the RBM48 family. As to quaternary structure, component of the minor spliceosome. Within this complex, interacts with ARMC7 and PRPF8/PRP8.

In terms of biological role, as a component of the minor spliceosome, involved in the splicing of U12-type introns in pre-mRNAs. In Homo sapiens (Human), this protein is RNA-binding protein 48 (RBM48).